A 499-amino-acid polypeptide reads, in one-letter code: Probable cytosol aminopeptidase (499 aa).

Positions 269 and 274 each coordinate Mn(2+). Lys281 is an active-site residue. Mn(2+) contacts are provided by Asp292, Asp351, and Glu353. The active site involves Arg355.

Belongs to the peptidase M17 family. Requires Mn(2+) as cofactor.

The protein resides in the cytoplasm. It carries out the reaction Release of an N-terminal amino acid, Xaa-|-Yaa-, in which Xaa is preferably Leu, but may be other amino acids including Pro although not Arg or Lys, and Yaa may be Pro. Amino acid amides and methyl esters are also readily hydrolyzed, but rates on arylamides are exceedingly low.. It catalyses the reaction Release of an N-terminal amino acid, preferentially leucine, but not glutamic or aspartic acids.. Its function is as follows. Presumably involved in the processing and regular turnover of intracellular proteins. Catalyzes the removal of unsubstituted N-terminal amino acids from various peptides. This is Probable cytosol aminopeptidase from Haemophilus ducreyi (strain 35000HP / ATCC 700724).